The chain runs to 470 residues: MLNHVVTRFAPSPTGHLHLGGARTALFNWLYAKHNNGKFLLRIEDTDSKRSSKELIDSIINSMIWLNIQHDGDIILQSSRISRHIEIANQLILNDKAYYCYCSEEEINLEKEEYTKKGLHYKHNCIWKNRNPPIGNCSKVIRLHSDTEGITEFKDKVYGTIAVNNVQLDDMVLLRSNNTPTYLLSVVVDDYDMGITHIIRGTDHLTNTARQLLIYNALGWKPPEFAHIPLIHDENGNKLSKRHHALGIHEYKNAGILPEALLNYLLRMGWSHGNDEVITIDEAIRWFSIDKVGQSPARLDSKKLEFLNNHYINATNNATIIEMIIPIIEKTIGYKVNTEKIGYLLNGINELKKRTKNLVNLANESLFYVEDIPISFDQESLIIIKSNHDILSILYDNLSKVLNDDWNNSTLTSMIKNIVKDYNTKIHNIYHCLRASIIGRINAPSIIDIMVNFQREECLNRIKYARDMVK.

A 'HIGH' region motif is present at residues 11 to 21 (PSPTGHLHLGG). The 'KMSKS' region signature appears at 238–242 (KLSKR). Residue Lys-241 coordinates ATP.

Belongs to the class-I aminoacyl-tRNA synthetase family. Glutamate--tRNA ligase type 1 subfamily. In terms of assembly, monomer.

The protein localises to the cytoplasm. It catalyses the reaction tRNA(Glu) + L-glutamate + ATP = L-glutamyl-tRNA(Glu) + AMP + diphosphate. In terms of biological role, catalyzes the attachment of glutamate to tRNA(Glu) in a two-step reaction: glutamate is first activated by ATP to form Glu-AMP and then transferred to the acceptor end of tRNA(Glu). This Ehrlichia ruminantium (strain Welgevonden) protein is Glutamate--tRNA ligase 2.